The chain runs to 677 residues: UvrABC system protein B (677 aa).

The Helicase ATP-binding domain occupies 25–412 (DGVNSGREYQ…SGAIIEQVIR (388 aa)). An ATP-binding site is contributed by 38 to 45 (GATGTGKT). The short motif at 91-114 (YYDYYQPEAYVPVSDTYIAKTSSI) is the Beta-hairpin element. The region spanning 429–591 (QVEDLLDEIR…IVPMPAGKKA (163 aa)) is the Helicase C-terminal domain. The UVR domain maps to 639–674 (PQLIDELETKMKKSAKDLDFENAAKLRDKIHQLRKK).

It belongs to the UvrB family. Forms a heterotetramer with UvrA during the search for lesions. Interacts with UvrC in an incision complex.

The protein localises to the cytoplasm. In terms of biological role, the UvrABC repair system catalyzes the recognition and processing of DNA lesions. A damage recognition complex composed of 2 UvrA and 2 UvrB subunits scans DNA for abnormalities. Upon binding of the UvrA(2)B(2) complex to a putative damaged site, the DNA wraps around one UvrB monomer. DNA wrap is dependent on ATP binding by UvrB and probably causes local melting of the DNA helix, facilitating insertion of UvrB beta-hairpin between the DNA strands. Then UvrB probes one DNA strand for the presence of a lesion. If a lesion is found the UvrA subunits dissociate and the UvrB-DNA preincision complex is formed. This complex is subsequently bound by UvrC and the second UvrB is released. If no lesion is found, the DNA wraps around the other UvrB subunit that will check the other stand for damage. The protein is UvrABC system protein B of Prochlorococcus marinus (strain SARG / CCMP1375 / SS120).